Consider the following 49-residue polypeptide: Large ribosomal subunit protein bL33 (49 aa).

It belongs to the bacterial ribosomal protein bL33 family.

In Thermotoga maritima (strain ATCC 43589 / DSM 3109 / JCM 10099 / NBRC 100826 / MSB8), this protein is Large ribosomal subunit protein bL33 (rpmG).